Reading from the N-terminus, the 570-residue chain is Phytoene desaturase (570 aa).

The helical transmembrane segment at Leu547 to Ile567 threads the bilayer.

It belongs to the carotenoid/retinoid oxidoreductase family. NAD(+) serves as cofactor.

The protein localises to the membrane. The enzyme catalyses 15-cis-phytoene + A = all-trans-phytofluene + AH2. The catalysed reaction is all-trans-phytofluene + A = all-trans-zeta-carotene + AH2. It catalyses the reaction all-trans-zeta-carotene + A = all-trans-neurosporene + AH2. It carries out the reaction all-trans-neurosporene + A = all-trans-lycopene + AH2. It functions in the pathway carotenoid biosynthesis. In terms of biological role, phytoene desaturase; part of the car gene cluster that mediates the biosynthesis of neurosporaxanthin, a carboxylic apocarotenoid acting as an essential protective pigments and leading to orange pigmentation. Converts phytoene into lycopene via the intermediates phytofluene, zeta-carotene and neurosporene; and further desaturates gamma-carotene into torulene. Neurosporaxanthin is synthesized from geranyl-geranyl pyrophosphate (GGPP) through several enzymatic activities. Phytoene synthase activity performed by the bifunctional enzyme carAR first produces phytoene from geranyl-geranyl pyrophosphate (GGPP). The phytoene dehydrogenase carB then introduces 4 desaturations to lead to lycopene which is substrate of the carotene cyclase activity of carAR that leads to the production of gamma-carotene. CarB then performs a 5th desaturation reaction to yield torulene. Torulene is the substrate of the dioxidase carT that breaks the molecule, removing five carbon atoms to yield beta-apo-4'-carotenal, whereas the aldehyde dehydrogenase carD mediates the last step by converting beta-apo-4'-carotenal into neurosporaxanthin. The protein is Phytoene desaturase of Fusarium fujikuroi (Bakanae and foot rot disease fungus).